The primary structure comprises 456 residues: MASKIGTAGNRSGTTGMPSFISQIPVSNPMGTEANNTNTSRMSDFGVLEQYLGFRIGDGANVNRSPLFNSTSATNPAVGFEVSGTINRTLAPSNTSLPTATPRSQTMLLQSNLVSASGTHHENWGESNMADSGSRTDTSTDMDGDDKNQLIEAGQSSDKSKEKVLDQKTLRRLAQNREAARKSRLRKKAYVQQLENSRLKLSQLEQDLQRARQQGKYISNIADQSNGVGANGPLAFDAEYSRWLEEHNKHINELRTAVNAHASDPELRSIVNNVTAHFDEVFRVKGNAAKADVFHVLSGMWKTPAERCFMWIGGFRPSELLKLLVNQLEPLTEQQLAGIYNLQQSSHQAEDALSQGMEALQQSLAETLANGSPAPEGSSGDVANYMGQMAMAMGKLGTLEGFLRQADNLRQQTLQQMHRVLTTRQSARALLAINEYFSRLRALSSLWLARPREQLV.

2 disordered regions span residues 1-41 (MASK…NTSR) and 115-170 (SASG…QKTL). Composition is skewed to polar residues over residues 9 to 41 (GNRSGTTGMPSFISQIPVSNPMGTEANNTNTSR) and 125 to 141 (GESNMADSGSRTDTSTD). Basic and acidic residues predominate over residues 158 to 169 (DKSKEKVLDQKT). The bZIP domain occupies 166 to 229 (DQKTLRRLAQ…NIADQSNGVG (64 aa)). The stretch at 167–220 (QKTLRRLAQNREAARKSRLRKKAYVQQLENSRLKLSQLEQDLQRARQQGKYISN) forms a coiled coil. Residues 168–188 (KTLRRLAQNREAARKSRLRKK) are basic motif. Positions 194 to 208 (LENSRLKLSQLEQDL) are leucine-zipper. The 218-residue stretch at 233–450 (PLAFDAEYSR…RALSSLWLAR (218 aa)) folds into the DOG1 domain.

It belongs to the bZIP family. As to quaternary structure, can form heterodimer with TGA2.2.

It is found in the nucleus. Its function is as follows. Transcriptional activator that binds specifically to the DNA sequence 5'-TGACG-3'. Recognizes ocs elements like the as-1 motif of the cauliflower mosaic virus 35S promoter. Binding to the as-1-like cis elements mediate auxin- and salicylic acid-inducible transcription. This Nicotiana tabacum (Common tobacco) protein is TGACG-sequence-specific DNA-binding protein TGA-2.1 (TGA21).